The sequence spans 176 residues: Ribosome maturation factor RimM (176 aa).

A PRC barrel domain is found at 97-176 (EDEFYWRDLI…QITVDWDPDF (80 aa)).

This sequence belongs to the RimM family. As to quaternary structure, binds ribosomal protein uS19.

It is found in the cytoplasm. Functionally, an accessory protein needed during the final step in the assembly of 30S ribosomal subunit, possibly for assembly of the head region. Essential for efficient processing of 16S rRNA. May be needed both before and after RbfA during the maturation of 16S rRNA. It has affinity for free ribosomal 30S subunits but not for 70S ribosomes. This Shewanella sediminis (strain HAW-EB3) protein is Ribosome maturation factor RimM.